A 305-amino-acid chain; its full sequence is Testis-expressed protein 52 (305 aa).

Residues 284 to 305 are disordered; sequence HLSKAQASKSPARKRKRRPGHF. Residues 294–305 are compositionally biased toward basic residues; that stretch reads PARKRKRRPGHF.

As to expression, expressed in Testis.

The protein is Testis-expressed protein 52 of Homo sapiens (Human).